A 75-amino-acid polypeptide reads, in one-letter code: DNA-directed RNA polymerase subunit omega (75 aa).

This sequence belongs to the RNA polymerase subunit omega family. In cyanobacteria the RNAP catalytic core is composed of 2 alpha, 1 beta, 1 beta', 1 gamma and 1 omega subunit. When a sigma factor is associated with the core the holoenzyme is formed, which can initiate transcription.

It carries out the reaction RNA(n) + a ribonucleoside 5'-triphosphate = RNA(n+1) + diphosphate. Promotes RNA polymerase assembly. Latches the N- and C-terminal regions of the beta' subunit thereby facilitating its interaction with the beta and alpha subunits. This is DNA-directed RNA polymerase subunit omega from Gloeothece citriformis (strain PCC 7424) (Cyanothece sp. (strain PCC 7424)).